The primary structure comprises 142 residues: Protein CPn_0742/CP_0003/CPj0742/CpB0770 (142 aa).

The segment at leucine 115–leucine 142 is disordered. Residues proline 124–leucine 142 show a composition bias toward basic residues.

This sequence belongs to the chlamydial CPn_0742/CT_635/TC_0003 family.

The sequence is that of Protein CPn_0742/CP_0003/CPj0742/CpB0770 from Chlamydia pneumoniae (Chlamydophila pneumoniae).